The following is a 164-amino-acid chain: Lipoprotein signal peptidase (164 aa).

Helical transmembrane passes span tryptophan 12–glutamine 32, tryptophan 70–serine 90, and alanine 102–valine 122. Residues aspartate 123 and aspartate 141 contribute to the active site. A helical transmembrane segment spans residues phenylalanine 137–leucine 157.

The protein belongs to the peptidase A8 family.

Its subcellular location is the cell inner membrane. It carries out the reaction Release of signal peptides from bacterial membrane prolipoproteins. Hydrolyzes -Xaa-Yaa-Zaa-|-(S,diacylglyceryl)Cys-, in which Xaa is hydrophobic (preferably Leu), and Yaa (Ala or Ser) and Zaa (Gly or Ala) have small, neutral side chains.. The protein operates within protein modification; lipoprotein biosynthesis (signal peptide cleavage). Functionally, this protein specifically catalyzes the removal of signal peptides from prolipoproteins. The polypeptide is Lipoprotein signal peptidase (Escherichia coli O157:H7).